The primary structure comprises 324 residues: Rho crystallin (324 aa).

Threonine 2 carries the N-acetylthreonine modification. 218–281 (SVLGSHRDRN…SFTPARIKQN (64 aa)) provides a ligand contact to NADP(+).

Belongs to the aldo/keto reductase family. Monomer.

The polypeptide is Rho crystallin (Rana temporaria (European common frog)).